A 651-amino-acid polypeptide reads, in one-letter code: Chaperone protein HtpG (651 aa).

The a; substrate-binding stretch occupies residues 1–353 (MAAHVEQLEF…AQDMSLNVSR (353 aa)). Residues 354–569 (EILQQDRQIR…TFGITPALAR (216 aa)) are b. The interval 570-651 (MYRASGQPVP…RLTRTVGDQT (82 aa)) is c.

It belongs to the heat shock protein 90 family. In terms of assembly, homodimer.

It is found in the cytoplasm. Its function is as follows. Molecular chaperone. Has ATPase activity. In Mycolicibacterium vanbaalenii (strain DSM 7251 / JCM 13017 / BCRC 16820 / KCTC 9966 / NRRL B-24157 / PYR-1) (Mycobacterium vanbaalenii), this protein is Chaperone protein HtpG.